The chain runs to 62 residues: Photosystem II reaction center protein Z (62 aa).

The next 2 helical transmembrane spans lie at Ala8 to Ala28 and Phe41 to Ile61.

It belongs to the PsbZ family. As to quaternary structure, PSII is composed of 1 copy each of membrane proteins PsbA, PsbB, PsbC, PsbD, PsbE, PsbF, PsbH, PsbI, PsbJ, PsbK, PsbL, PsbM, PsbT, PsbY, PsbZ, Psb30/Ycf12, at least 3 peripheral proteins of the oxygen-evolving complex and a large number of cofactors. It forms dimeric complexes.

It localises to the plastid. Its subcellular location is the chloroplast thylakoid membrane. In terms of biological role, may control the interaction of photosystem II (PSII) cores with the light-harvesting antenna, regulates electron flow through the 2 photosystem reaction centers. PSII is a light-driven water plastoquinone oxidoreductase, using light energy to abstract electrons from H(2)O, generating a proton gradient subsequently used for ATP formation. The sequence is that of Photosystem II reaction center protein Z from Oenothera elata subsp. hookeri (Hooker's evening primrose).